A 272-amino-acid polypeptide reads, in one-letter code: F-actin-capping protein subunit beta (272 aa).

The protein belongs to the F-actin-capping protein beta subunit family. As to quaternary structure, component of the F-actin capping complex, composed of a heterodimer of an alpha and a beta subunit.

The protein resides in the cytoplasm. It is found in the cytoskeleton. Functionally, F-actin-capping proteins bind in a Ca(2+)-independent manner to the fast growing ends of actin filaments (barbed end) thereby blocking the exchange of subunits at these ends. Unlike other capping proteins (such as gelsolin and severin), these proteins do not sever actin filaments. The polypeptide is F-actin-capping protein subunit beta (acpA) (Dictyostelium discoideum (Social amoeba)).